The sequence spans 154 residues: Snaclec EMS16 subunit beta (154 aa).

Positions 1–26 are cleaved as a signal peptide; it reads MGRLISVRFSLLVVFLSLSGIGAGLC. Cys-27 and Cys-38 form a disulfide bridge. One can recognise a C-type lectin domain in the interval 34-147; that stretch reads FDQHCYKVFE…CEKSVSFVCK (114 aa). Residue Asn-47 is glycosylated (N-linked (GlcNAc...) asparagine). Cystine bridges form between Cys-55/Cys-146 and Cys-121/Cys-138.

This sequence belongs to the snaclec family. Heterodimer of subunits A and B; disulfide-linked. In terms of tissue distribution, expressed by the venom gland.

The protein resides in the secreted. Its function is as follows. EMS16 is a potent and selective inhibitor of alpha-2/beta-1 (ITGA2/ITGB1) integrin and acts as a potent antagonist of platelet aggregation and cell migration. Binds specifically to the I domain of the alpha-2 subunit, in a metal ion-independent fashion. This is Snaclec EMS16 subunit beta from Echis multisquamatus (Central Asian sand viper).